The sequence spans 265 residues: Expansin-like A1 (265 aa).

Residues 1–20 (MGSFLFLIVVIFLFSSSVNA) form the signal peptide. The Expansin-like EG45 domain maps to 41 to 147 (SGACAYGSMA…QRVPCDYGNK (107 aa)). The chain crosses the membrane as a helical span at residues 42–62 (GACAYGSMATSFFAGHIAAAI). N-linked (GlcNAc...) asparagine glycans are attached at residues asparagine 99 and asparagine 102. The Expansin-like CBD domain occupies 161 to 244 (NYLEIKLLYQ…NWEAGKIYDA (84 aa)).

It belongs to the expansin family. Expansin-like A subfamily.

Its subcellular location is the membrane. The polypeptide is Expansin-like A1 (EXLA1) (Arabidopsis thaliana (Mouse-ear cress)).